The chain runs to 297 residues: Tyrosine recombinase XerC (297 aa).

The Core-binding (CB) domain occupies 1 to 84; the sequence is MEEIQVTFLN…TLRTFYEFWM (84 aa). Residues 105 to 286 form the Tyr recombinase domain; sequence YLPQFFYEEE…SNQQLRKVYL (182 aa). Catalysis depends on residues Arg-145, Lys-169, His-238, Arg-241, and His-264. Tyr-273 functions as the O-(3'-phospho-DNA)-tyrosine intermediate in the catalytic mechanism.

Belongs to the 'phage' integrase family. XerC subfamily. In terms of assembly, forms a cyclic heterotetrameric complex composed of two molecules of XerC and two molecules of XerD.

It localises to the cytoplasm. In terms of biological role, site-specific tyrosine recombinase, which acts by catalyzing the cutting and rejoining of the recombining DNA molecules. The XerC-XerD complex is essential to convert dimers of the bacterial chromosome into monomers to permit their segregation at cell division. It also contributes to the segregational stability of plasmids. This Staphylococcus haemolyticus (strain JCSC1435) protein is Tyrosine recombinase XerC.